Reading from the N-terminus, the 85-residue chain is Putative septation protein SpoVG (85 aa).

Belongs to the SpoVG family.

Its function is as follows. Could be involved in septation. This is Putative septation protein SpoVG from Archaeoglobus fulgidus (strain ATCC 49558 / DSM 4304 / JCM 9628 / NBRC 100126 / VC-16).